Here is a 603-residue protein sequence, read N- to C-terminus: Probable potassium transport system protein Kup (603 aa).

A run of 12 helical transmembrane segments spans residues 15–35, 43–63, 94–114, 135–155, 163–183, 209–229, 244–264, 283–303, 336–356, 365–385, 390–410, and 415–435; these read GLVF…IFLL, IIGV…VEYA, VAFV…DGVI, NIGQ…LFSV, ITWV…FSGI, GIIG…GEAL, AWRF…AFLI, ILYI…SQAM, IYIS…MLIF, AYGL…TSIF, NITK…FLLS, and IPHG…LILI.

This sequence belongs to the HAK/KUP transporter (TC 2.A.72) family.

It is found in the cell membrane. The enzyme catalyses K(+)(in) + H(+)(in) = K(+)(out) + H(+)(out). In terms of biological role, transport of potassium into the cell. Likely operates as a K(+):H(+) symporter. The protein is Probable potassium transport system protein Kup of Methanosarcina barkeri (strain Fusaro / DSM 804).